Consider the following 426-residue polypeptide: Large envelope protein (426 aa).

A lipid anchor (N-myristoyl glycine; by host) is attached at Gly-2. A pre-S1 region spans residues 2–143; sequence GNNIKVTFNP…PPLRDTHPHL (142 aa). The tract at residues 2 to 202 is pre-S; that stretch reads GNNIKVTFNP…PSTTGDPAQS (201 aa). Residues 2-209 are Virion surface; in external conformation-facing; the sequence is GNNIKVTFNP…AQSPEMSPSS (208 aa). At 2–281 the chain is on the intravirion; in internal conformation side; it reads GNNIKVTFNP…NGFRWMYLRR (280 aa). A glycan (N-linked (GlcNAc...) asparagine) is linked at Asn-3. The segment at 107 to 142 is disordered; that stretch reads IRDIPRGLVPPQTPTNRDQGRKPTPPTPPLRDTHPH. Residues 144–202 are pre-S2; the sequence is TMKNQTFHLQGFVDGLRDLTTTERQHNAYGDPFTTLSPVVPTVSTILSPPSTTGDPAQS. A helical membrane pass occupies residues 210–230; sequence LLGLLAGLQVVYFLWTKILTI. The Intravirion; in external conformation portion of the chain corresponds to 231 to 281; that stretch reads AQNLDWWWTSLSFPGGIPECTGQNSQFQTCKHLPTSCPPTCNGFRWMYLRR. Residues 282 to 302 form a helical membrane-spanning segment; sequence FIIYLLVLLLCLIFLLVLLDW. Residues 303 to 374 are Virion surface-facing; that stretch reads KGLIPVCPIQ…WALARFSWLN (72 aa). A glycan (N-linked (GlcNAc...) asparagine; by host) is linked at Asn-346. The chain crosses the membrane as a helical span at residues 375-395; it reads LLVPLLQWLGGISLIAWFLLI. Topologically, residues 396–401 are intravirion; it reads WMIWFW. A helical membrane pass occupies residues 402 to 424; the sequence is GPALLSILPPFIPIFVLFFLIWV. Residues 425–426 lie on the Virion surface side of the membrane; sequence YI.

This sequence belongs to the orthohepadnavirus major surface antigen family. In its internal form (Li-HBsAg), interacts with the capsid protein and with the isoform S. Interacts with host chaperone CANX. In terms of assembly, associates with host chaperone CANX through its pre-S2 N glycan; this association may be essential for isoform M proper secretion. As to quaternary structure, interacts with isoform L. Interacts with the antigens of satellite virus HDV (HDVAgs); this interaction is required for encapsidation of HDV genomic RNA. In terms of processing, isoform M is N-terminally acetylated by host at a ratio of 90%, and N-glycosylated by host at the pre-S2 region. Myristoylated.

The protein resides in the virion membrane. Its function is as follows. The large envelope protein exists in two topological conformations, one which is termed 'external' or Le-HBsAg and the other 'internal' or Li-HBsAg. In its external conformation the protein attaches the virus to cell receptors and thereby initiating infection. This interaction determines the species specificity and liver tropism. This attachment induces virion internalization predominantly through caveolin-mediated endocytosis. The large envelope protein also assures fusion between virion membrane and endosomal membrane. In its internal conformation the protein plays a role in virion morphogenesis and mediates the contact with the nucleocapsid like a matrix protein. In terms of biological role, the middle envelope protein plays an important role in the budding of the virion. It is involved in the induction of budding in a nucleocapsid independent way. In this process the majority of envelope proteins bud to form subviral lipoprotein particles of 22 nm of diameter that do not contain a nucleocapsid. The polypeptide is Large envelope protein (Marmota monax (Woodchuck)).